Reading from the N-terminus, the 613-residue chain is Immunoglobulin superfamily member 8 (613 aa).

The N-terminal stretch at Met-1 to Ala-27 is a signal peptide. Ig-like C2-type domains follow at residues Arg-28–Leu-149, Pro-162–Ile-286, Ser-303–Ser-424, and Pro-431–Ala-560. The Extracellular portion of the chain corresponds to Arg-28–Thr-579. A disulfide bridge connects residues Cys-49 and Cys-127. An N-linked (GlcNAc...) asparagine glycan is attached at Asn-50. A disordered region spans residues Val-155–Met-174. A disulfide bridge connects residues Cys-186 and Cys-270. Residues Glu-274–Ile-276 carry the EWI motif motif. 2 disulfide bridges follow: Cys-326-Cys-406 and Cys-462-Cys-544. 2 N-linked (GlcNAc...) asparagine glycosylation sites follow: Asn-327 and Asn-463. Ser-518 carries the post-translational modification Phosphoserine. Residues Leu-580–Gly-600 form a helical membrane-spanning segment. Residues Thr-601–Arg-613 lie on the Cytoplasmic side of the membrane. Residues Cys-604 and Cys-605 are each lipidated (S-palmitoyl cysteine).

As to quaternary structure, interacts directly with CD82, CD81/tetraspanin-28 and CD9/tetraspanin-29. Also interacts with integrin alpha-3/beta-1 and integrin alpha-4/beta-1. Interacts with HSPA8; this interaction modulates migratory and antigen-presenting capacities of dendritic cells. Expressed in brain, kidney, testis, liver and placenta with moderate expression in all other tissues. Detected on a majority of B-cells, T-cells, and natural killer cells. Expressed on dendritic cells.

Its subcellular location is the cell membrane. Member of the immunoglobulin superfamily (IgSF) that links tetraspanin-enriched microdomains to the actin cytoskeleton and plays several important roles in innate and adaptive immunity. Acts as an inducible receptor of HSPA8 on dendritic cells to enhance the CCL21/SLC-dependent migration of activated mature dendritic cells while attenuating their antigen-specific stimulatory capacities. In complex with alpha-actinins ACTN1 and ACTN4, regulates actin dynamics in the immune synapse and subsequent T-cell activation. Inhibits the entry of several viruses such as hepatitis C Virus (HCV) or HIV-1. Mechanistically, promotes a change in CD81 organization at the plasma membrane by significantly restricting its diffusion which in turn influences CD81 interaction with Claudin-1/CLDN1, preventing CLDN1 from acting as a co-receptor required for HCV entry. Accumulates at the presynaptic terminal, the producer cell side of the virological synapse, to prevent HIV-1 Env-mediated cell-cell fusion. Highly expressed on malignant cells with antigen presentation defects, interacts with NK receptor KIR3DL2 to suppress NK-cell cytotoxicity. May participate in the regulation of neurite outgrowth and maintenance of the neural network in the adult brain. This Homo sapiens (Human) protein is Immunoglobulin superfamily member 8 (IGSF8).